The following is a 357-amino-acid chain: Poly(3-hydroxyalkanoate) polymerase subunit PhaE (357 aa).

Positions alanine 320–aspartate 357 are disordered. Residues proline 331–alanine 344 show a composition bias toward low complexity.

This sequence belongs to the PHA/PHB synthase family. Type III PhaE subfamily. As to quaternary structure, a large complex of PhaC and PhaE; the ratio of the subunits has been estimated to be from 1:1 to 4:1, with more PhaE than PhaC.

It is found in the cytoplasm. Its pathway is biopolymer metabolism; poly-(R)-3-hydroxybutanoate biosynthesis. Polymerizes D(-)-3-hydroxybutyryl-CoA to create polyhydroxybutyrate (PHB) which consists of thousands of hydroxybutyrate molecules linked end to end. This subunit has no catalytic activity but enhances the activity of PhaC, the catalytic subunit, 100-fold. The sequence is that of Poly(3-hydroxyalkanoate) polymerase subunit PhaE from Allochromatium vinosum (strain ATCC 17899 / DSM 180 / NBRC 103801 / NCIMB 10441 / D) (Chromatium vinosum).